The chain runs to 1031 residues: Kinesin heavy chain (1031 aa).

The region spanning 8–325 (NIKVVCRVRP…LMFGQRAKTI (318 aa)) is the Kinesin motor domain. 84–91 (GQTSSGKT) contributes to the ATP binding site. The stretch at 393 to 857 (PKQMTVHVSE…RDNADLRCEL (465 aa)) forms a coiled coil. Basic and acidic residues predominate over residues 673–686 (TDQEDKKREEEDKM). 2 disordered regions span residues 673 to 692 (TDQE…ATEM) and 906 to 1031 (RNFA…EQGS). A globular region spans residues 858–1031 (PKLERRLRAT…PLTTSGEQGS (174 aa)). Positions 932 to 949 (GSTGIRGGGYSGIRGGGS) are enriched in gly residues. Composition is skewed to polar residues over residues 964 to 977 (SHNN…NPND) and 1014 to 1031 (RNNT…EQGS).

The protein belongs to the TRAFAC class myosin-kinesin ATPase superfamily. Kinesin family. Kinesin subfamily. Oligomer composed of two heavy chains and two light chains.

The protein localises to the cytoplasm. It is found in the cytoskeleton. Kinesin is a microtubule-associated force-producing protein that may play a role in organelle transport. The chain is Kinesin heavy chain from Strongylocentrotus purpuratus (Purple sea urchin).